An 80-amino-acid polypeptide reads, in one-letter code: Putative membrane protein insertion efficiency factor (80 aa).

Residues 61–80 form a disordered region; sequence KTGKDPVPDRFSLKRNQEGE. Over residues 62 to 80 the composition is skewed to basic and acidic residues; that stretch reads TGKDPVPDRFSLKRNQEGE.

It belongs to the UPF0161 family.

It localises to the cell membrane. In terms of biological role, could be involved in insertion of integral membrane proteins into the membrane. This is Putative membrane protein insertion efficiency factor from Streptococcus pneumoniae (strain P1031).